The sequence spans 198 residues: ATP-dependent Clp protease proteolytic subunit (198 aa).

Ser-102 acts as the Nucleophile in catalysis. The active site involves His-127.

It belongs to the peptidase S14 family. In terms of assembly, fourteen ClpP subunits assemble into 2 heptameric rings which stack back to back to give a disk-like structure with a central cavity, resembling the structure of eukaryotic proteasomes.

It is found in the cytoplasm. The catalysed reaction is Hydrolysis of proteins to small peptides in the presence of ATP and magnesium. alpha-casein is the usual test substrate. In the absence of ATP, only oligopeptides shorter than five residues are hydrolyzed (such as succinyl-Leu-Tyr-|-NHMec, and Leu-Tyr-Leu-|-Tyr-Trp, in which cleavage of the -Tyr-|-Leu- and -Tyr-|-Trp bonds also occurs).. Functionally, cleaves peptides in various proteins in a process that requires ATP hydrolysis. Has a chymotrypsin-like activity. Plays a major role in the degradation of misfolded proteins. This chain is ATP-dependent Clp protease proteolytic subunit, found in Brachyspira hyodysenteriae (strain ATCC 49526 / WA1).